A 360-amino-acid polypeptide reads, in one-letter code: Isopentenyl-diphosphate delta-isomerase (360 aa).

Substrate is bound at residue 6–7 (RK). FMN is bound by residues Thr62, 63 to 65 (GMT), Ser93, and Asn122. 93 to 95 (SQR) serves as a coordination point for substrate. Residue Gln157 participates in substrate binding. Mg(2+) is bound at residue Glu158. FMN contacts are provided by residues Lys189, Ser214, Thr219, 272-274 (GIR), and 293-294 (AL).

Belongs to the IPP isomerase type 2 family. As to quaternary structure, homooctamer. Dimer of tetramers. FMN serves as cofactor. NADPH is required as a cofactor. It depends on Mg(2+) as a cofactor.

It is found in the cytoplasm. It carries out the reaction isopentenyl diphosphate = dimethylallyl diphosphate. Functionally, involved in the biosynthesis of isoprenoids. Catalyzes the 1,3-allylic rearrangement of the homoallylic substrate isopentenyl (IPP) to its allylic isomer, dimethylallyl diphosphate (DMAPP). The protein is Isopentenyl-diphosphate delta-isomerase of Ignicoccus hospitalis (strain KIN4/I / DSM 18386 / JCM 14125).